The sequence spans 68 residues: Elastase inhibitor AFLEI (68 aa).

C5 and C67 are oxidised to a cystine.

It is found in the secreted. Functionally, elastase inhibitor. Inhibitor of A.flavus elastase with a Ki of 40 nM. Inhibitor of A.fumigatus elastase and human leukocyte elastase. Inhibits the fibrinogenase and collagenase activities of A.flavus elastase. Does not inhibit porcine pancreatic elastase, trypsin, chymotrypsin, thrombin or A.acutus AC1-proteinase. The chain is Elastase inhibitor AFLEI from Aspergillus flavus.